Consider the following 351-residue polypeptide: Outer membrane protein A (351 aa).

The signal sequence occupies residues 1-21 (MKKTAIAIAVALAGFATVAQA). 8 beta stranded membrane passes run 27–37 (TWYTGAKLGWS), 55–66 (QLGAGAFGGYQV), 70–78 (VGFEMGYDW), 96–107 (QGVQLTAKLGYP), 112–120 (LDIYTRLGG), 147–156 (PVFAGGVEWA), 161–168 (IATRLEYQ), and 187–195 (LLSLGVSYR). A run of 4 repeats spans residues 206–207 (AP), 208–209 (AP), 210–211 (AP), and 212–213 (AP). The tract at residues 206-213 (APAPAPAP) is 4 X 2 AA tandem repeats of A-P. One can recognise an OmpA-like domain in the interval 215 to 343 (VQTKHFTLKS…RVEIEVKGIK (129 aa)). Residues Cys316 and Cys328 are joined by a disulfide bond.

Belongs to the outer membrane OOP (TC 1.B.6) superfamily. OmpA family. Monomer and homodimer.

It is found in the cell outer membrane. Its function is as follows. With TolR probably plays a role in maintaining the position of the peptidoglycan cell wall in the periplasm. Acts as a porin with low permeability that allows slow penetration of small solutes; an internal gate slows down solute passage. In terms of biological role, required for conjugation with F-type plasmids; probably serves as the mating receptor on recipient cells. The protein is Outer membrane protein A of Escherichia fergusonii (strain ATCC 35469 / DSM 13698 / CCUG 18766 / IAM 14443 / JCM 21226 / LMG 7866 / NBRC 102419 / NCTC 12128 / CDC 0568-73).